The primary structure comprises 719 residues: ATP-dependent RNA helicase p62 (719 aa).

Residues 94–234 (AQSQRAFRDS…GSQDLPMRPV (141 aa)) form a disordered region. Basic and acidic residues-rich tracts occupy residues 99–108 (AFRDSSKPDS) and 137–171 (EEIKIEGVMAPHDRDFGHSGRGGRGGDRGGDDRRG). The segment covering 172 to 188 (GGGGGNRFGGGGGGGDY) has biased composition (gly residues). The segment covering 194-205 (GRVEKRRDDRGG) has biased composition (basic and acidic residues). Over residues 206–226 (GNRFGGGGGFGDRRGGGGGGS) the composition is skewed to gly residues. Positions 281 to 309 (QDFSEVHLPDYVMKEIRRQGYKAPTAIQA) match the Q motif motif. Residues 312-487 (WPIAMSGSNF…EDFLGNYIQI (176 aa)) form the Helicase ATP-binding domain. 325–332 (AKTGSGKT) provides a ligand contact to ATP. Residues 435-438 (DEAD) carry the DEAD box motif. Residues 519 to 664 (LLSDIYDTSE…EINPALENLA (146 aa)) form the Helicase C-terminal domain. The disordered stretch occupies residues 689–719 (GGGFKKGSLSNGRGFGGGGGGGGEGRHSRFD). Residues 701-711 (RGFGGGGGGGG) show a composition bias toward gly residues.

The protein belongs to the DEAD box helicase family. DDX5/DBP2 subfamily. As to quaternary structure, interacts with Fmr1 to form the RNA-induced silencing complex (RISC), a ribonucleoprotein (RNP) complex involved in translation regulation, other components of the complex are RpL5, RpL11, AGO2 and Dcr-1.

It localises to the nucleus. Its subcellular location is the nucleolus. It is found in the cytoplasm. The protein resides in the cytosol. The catalysed reaction is ATP + H2O = ADP + phosphate + H(+). Its function is as follows. As an RNA helicase, unwinds RNA and alters RNA structures through ATP binding and hydrolysis. Involved in multiple cellular processes, including pre-mRNA splicing, alternative splicing, rRNA processing and miRNA processing, as well as transcription regulation. Plays a role in innate immunity. Specifically restricts bunyavirus infection, including Rift Valley fever virus (RVFV) or La Crosse virus (LACV), but not vesicular stomatitis virus (VSV), in an interferon- and DROSHA-independent manner. This is ATP-dependent RNA helicase p62 (Rm62) from Drosophila melanogaster (Fruit fly).